The primary structure comprises 498 residues: Actin-binding protein WASF2 (498 aa).

2 disordered regions span residues lysine 173–tryptophan 203 and asparagine 240–aspartate 435. Low complexity predominate over residues serine 252 to serine 263. The span at serine 298 to phenylalanine 407 shows a compositional bias: pro residues. The 18-residue stretch at alanine 436 to valine 453 folds into the WH2 domain. Serine 474 is modified (phosphoserine).

Belongs to the SCAR/WAVE family. Binds actin and the Arp2/3 complex. Interacts with BAIAP2. Component of the WAVE2 complex composed of ABI1, CYFIP1/SRA1, NCKAP1/NAP1 (NCKAP1l/HEM1 in hematopoietic cells) and WASF2/WAVE2. Directly interacts with BRK1. Interacts with FNBP1L (via the SH3 domain). As to quaternary structure, (Microbial infection) Interacts with human cytomegalovirus protein UL135. Expressed in all tissues with strongest expression in placenta, lung, and peripheral blood leukocytes, but not in skeletal muscle.

It is found in the cytoplasm. The protein localises to the cytoskeleton. Its subcellular location is the cell projection. The protein resides in the lamellipodium. It localises to the basolateral cell membrane. Its function is as follows. Downstream effector molecule involved in the transmission of signals from tyrosine kinase receptors and small GTPases to the actin cytoskeleton. Promotes formation of actin filaments. Part of the WAVE complex that regulates lamellipodia formation. The WAVE complex regulates actin filament reorganization via its interaction with the Arp2/3 complex. The sequence is that of Actin-binding protein WASF2 from Homo sapiens (Human).